A 333-amino-acid chain; its full sequence is Holliday junction branch migration complex subunit RuvB (333 aa).

The large ATPase domain (RuvB-L) stretch occupies residues 1 to 181 (MARILDNDLL…FGINGHMEYY (181 aa)). ATP is bound by residues L20, R21, G62, K65, T66, T67, 128 to 130 (EDY), R171, Y181, and R218. Mg(2+) is bound at residue T66. The segment at 130-148 (YYIDIMIGAGETSRSVHLD) is presensor-1 beta-hairpin. The tract at residues 182–252 (ELPDLTEIVE…IADQALTMLD (71 aa)) is small ATPAse domain (RuvB-S). Positions 255 to 333 (HEGLDYVDQK…HMGYDYTRDN (79 aa)) are head domain (RuvB-H). DNA-binding residues include R291, R310, R312, and R315.

The protein belongs to the RuvB family. In terms of assembly, homohexamer. Forms an RuvA(8)-RuvB(12)-Holliday junction (HJ) complex. HJ DNA is sandwiched between 2 RuvA tetramers; dsDNA enters through RuvA and exits via RuvB. Only 4 subunits contact one DNA strand at any time. Two adjacent subunits are contacted by domain III of RuvA. An RuvB hexamer assembles on each DNA strand where it exits the tetramer. Each RuvB hexamer is contacted by two RuvA subunits (via domain III) on 2 adjacent RuvB subunits; this complex drives branch migration. In the full resolvosome a probable DNA-RuvA(4)-RuvB(12)-RuvC(2) complex forms which resolves the HJ.

Its subcellular location is the cytoplasm. The catalysed reaction is ATP + H2O = ADP + phosphate + H(+). Its activity is regulated as follows. Binding of domain III of RuvA to a single subunit of the RuvB hexamer activates the ATPase 2 subunits away and nucleotide exchange in the adjacent subunit. Its function is as follows. The RuvA-RuvB-RuvC complex processes Holliday junction (HJ) DNA during genetic recombination and DNA repair, while the RuvA-RuvB complex plays an important role in the rescue of blocked DNA replication forks via replication fork reversal (RFR). Catalyzes branch migration on Holliday junction (HJ) DNA in complex with RuvA from S.typhimurim and ATP. RuvA specifically binds to HJ cruciform DNA, conferring on it an open structure. The RuvB hexamer acts as an ATP-dependent pump, pulling dsDNA into and through the RuvAB complex. Forms 2 homohexamers on either side of HJ DNA bound by 1 or 2 RuvA tetramers; 4 subunits per hexamer contact DNA at a time. Coordinated motions by a converter formed by DNA-disengaged RuvB subunits stimulates ATP hydrolysis and nucleotide exchange. Immobilization of the converter enables RuvB to convert the ATP-contained energy into a lever motion, pulling 2 nucleotides of DNA out of the RuvA tetramer per ATP hydrolyzed, thus driving DNA branch migration. The RuvB motors rotate together with the DNA substrate, which together with the progressing nucleotide cycle forms the mechanistic basis for DNA recombination by continuous branch migration. Branch migration allows RuvC to scan DNA until it finds its consensus sequence, where it cleaves and resolves cruciform DNA. The protein is Holliday junction branch migration complex subunit RuvB of Streptococcus thermophilus (strain ATCC BAA-250 / LMG 18311).